Consider the following 323-residue polypeptide: Zinc finger C2HC domain-containing protein 1A (323 aa).

The C2HC/C3H-type 1 zinc finger occupies 14–43; the sequence is ELLPCKICGRTFFPVALKKHGPICQKTATK. The Zn(2+) site is built by C18, C21, H33, and C37. Residues 42 to 81 form a disordered region; the sequence is TKKRKTFDSSRQRAEGTDIPTVKPLKPRPEPPKKPSNWRR. Basic and acidic residues predominate over residues 47 to 57; it reads TFDSSRQRAEG. A C2HC/C3H-type 2 zinc finger spans residues 117–146; sequence DYIQCPYCQRRFNENAADRHINFCKEQAAR. Residues C121, C124, H136, and C140 each coordinate Zn(2+). The interval 149–258 is disordered; that stretch reads NKGKFSTDTK…NPASGVLTSK (110 aa). Positions 177–197 are enriched in polar residues; that stretch reads SPGTTSSGSSRLPQPSGTSKT. Residues 198–214 are compositionally biased toward low complexity; it reads VVGAPSGKVSSVSSSSG. S221 bears the Phosphoserine mark. Position 242 is a phosphothreonine (T242). S290 is subject to Phosphoserine.

It belongs to the ZC2HC1 family. Zn(2+) is required as a cofactor.

This is Zinc finger C2HC domain-containing protein 1A (ZC2HC1A) from Bos taurus (Bovine).